The chain runs to 411 residues: Dipeptidase 1 (411 aa).

The first 16 residues, 1-16, serve as a signal peptide directing secretion; it reads MWSGWWLWPLVAVCTA. 2 residues coordinate Zn(2+): His-36 and Asp-38. Asn-57 carries N-linked (GlcNAc...) asparagine glycosylation. Cys-87 and Cys-170 are joined by a disulfide. Zn(2+) is bound at residue Glu-141. Residue His-168 participates in substrate binding. Zn(2+)-binding residues include His-214 and His-235. A disulfide bond links Cys-242 and Cys-274. Arg-246 contributes to the substrate binding site. Asn-279 carries N-linked (GlcNAc...) asparagine glycosylation. Residue Asp-304 participates in substrate binding. N-linked (GlcNAc...) asparagine glycans are attached at residues Asn-332 and Asn-358. The GPI-anchor amidated serine moiety is linked to residue Ser-385. The propeptide at 386–411 is removed in mature form; that stretch reads GASSLHRHWGLLLASLAPLVLCLSLL.

Belongs to the metallo-dependent hydrolases superfamily. Peptidase M19 family. Homodimer; disulfide-linked. It depends on Zn(2+) as a cofactor. In terms of tissue distribution, expressed in lung and kidneys.

The protein resides in the apical cell membrane. The protein localises to the cell projection. It localises to the microvillus membrane. It carries out the reaction an L-aminoacyl-L-amino acid + H2O = 2 an L-alpha-amino acid. It catalyses the reaction leukotriene D4 + H2O = leukotriene E4 + glycine. The enzyme catalyses a beta-lactam + H2O = a substituted beta-amino acid. The catalysed reaction is L-cystine-bis-glycine + 2 H2O = L-cystine + 2 glycine. It carries out the reaction glycyldehydrophenylalanine + H2O = 2,3-didehydrophenylalanine + glycine. Its activity is regulated as follows. Inhibited by L-penicillamine. Beta-lactamase activity is inhibited by cilastatin. Functionally, hydrolyzes a wide range of dipeptides including the conversion of leukotriene D4 to leukotriene E4. Hydrolyzes cystinyl-bis-glycine (cys-bis-gly) formed during glutathione degradation. Also possesses beta lactamase activity and can hydrolyze the beta-lactam antibiotic imipenem. Independently of its dipeptidase activity, acts as an adhesion receptor for neutrophil recruitment from bloodstream into inflamed lungs and liver. The sequence is that of Dipeptidase 1 (DPEP1) from Homo sapiens (Human).